The following is a 763-amino-acid chain: Phosphoglycerol transferase I (763 aa).

4 helical membrane passes run 4 to 19, 26 to 48, 76 to 98, and 105 to 127; these read LLSF…IYAW, WWFA…LFAS, YILP…GWIL, and PHHF…ASPA.

The protein belongs to the OpgB family.

It is found in the cell inner membrane. The enzyme catalyses a phosphatidylglycerol + a membrane-derived-oligosaccharide D-glucose = a 1,2-diacyl-sn-glycerol + a membrane-derived-oligosaccharide 6-(glycerophospho)-D-glucose.. Its pathway is glycan metabolism; osmoregulated periplasmic glucan (OPG) biosynthesis. Functionally, transfers a phosphoglycerol residue from phosphatidylglycerol to the membrane-bound nascent glucan backbones. The sequence is that of Phosphoglycerol transferase I from Escherichia coli O6:H1 (strain CFT073 / ATCC 700928 / UPEC).